The following is a 63-amino-acid chain: Cecropin-A1 (63 aa).

A signal peptide spans 1–19 (MNFYNIFVFVALILAITIG). Arginine amide is present on R62.

Belongs to the cecropin family.

Its subcellular location is the secreted. Functionally, cecropins have lytic and antibacterial activity against several Gram-positive and Gram-negative bacteria. The sequence is that of Cecropin-A1 (CecA1) from Drosophila simulans (Fruit fly).